The sequence spans 247 residues: Ribonuclease 3 (247 aa).

The RNase III domain occupies 21 to 149 (LQKLSKKIGI…LVGAIYLDQG (129 aa)). E62 contacts Mg(2+). Residue D66 is part of the active site. Residues N135 and E138 each contribute to the Mg(2+) site. E138 is a catalytic residue. The region spanning 176–245 (DYKTQLQEYS…AKELYNRIRK (70 aa)) is the DRBM domain.

The protein belongs to the ribonuclease III family. Homodimer. Mg(2+) serves as cofactor.

It localises to the cytoplasm. It carries out the reaction Endonucleolytic cleavage to 5'-phosphomonoester.. Its function is as follows. Digests double-stranded RNA. Involved in the processing of primary rRNA transcript to yield the immediate precursors to the large and small rRNAs (23S and 16S). Processes some mRNAs, and tRNAs when they are encoded in the rRNA operon. Processes pre-crRNA and tracrRNA of type II CRISPR loci if present in the organism. The polypeptide is Ribonuclease 3 (Leptospira interrogans serogroup Icterohaemorrhagiae serovar copenhageni (strain Fiocruz L1-130)).